The primary structure comprises 43 residues: uncharacterized protein (43 aa).

The signal sequence occupies residues 1–22 (MKRKIIAIGIFFRLFIIHIHFS).

This is an uncharacterized protein from Schizosaccharomyces pombe (strain 972 / ATCC 24843) (Fission yeast).